A 265-amino-acid chain; its full sequence is Tryptophan synthase alpha chain (265 aa).

Catalysis depends on proton acceptor residues Glu49 and Asp60.

This sequence belongs to the TrpA family. As to quaternary structure, tetramer of two alpha and two beta chains.

It catalyses the reaction (1S,2R)-1-C-(indol-3-yl)glycerol 3-phosphate + L-serine = D-glyceraldehyde 3-phosphate + L-tryptophan + H2O. It functions in the pathway amino-acid biosynthesis; L-tryptophan biosynthesis; L-tryptophan from chorismate: step 5/5. Functionally, the alpha subunit is responsible for the aldol cleavage of indoleglycerol phosphate to indole and glyceraldehyde 3-phosphate. The polypeptide is Tryptophan synthase alpha chain (Paracoccus denitrificans (strain Pd 1222)).